Consider the following 258-residue polypeptide: 3-deoxy-manno-octulosonate cytidylyltransferase (258 aa).

This sequence belongs to the KdsB family.

Its subcellular location is the cytoplasm. It catalyses the reaction 3-deoxy-alpha-D-manno-oct-2-ulosonate + CTP = CMP-3-deoxy-beta-D-manno-octulosonate + diphosphate. The protein operates within nucleotide-sugar biosynthesis; CMP-3-deoxy-D-manno-octulosonate biosynthesis; CMP-3-deoxy-D-manno-octulosonate from 3-deoxy-D-manno-octulosonate and CTP: step 1/1. It participates in bacterial outer membrane biogenesis; lipopolysaccharide biosynthesis. In terms of biological role, activates KDO (a required 8-carbon sugar) for incorporation into bacterial lipopolysaccharide in Gram-negative bacteria. In Nitrobacter hamburgensis (strain DSM 10229 / NCIMB 13809 / X14), this protein is 3-deoxy-manno-octulosonate cytidylyltransferase.